A 375-amino-acid polypeptide reads, in one-letter code: MTQTGKRQRRKFGRIRQFNSGRWQASYTGPDGRVYIAPKTFNAKIDAEAWLTDRRREIDRQLWSPASGQEDRPGAPFGEYAEGWLKQRGIKDRTRAHYRKLLDNHILATFADTDLRDITPAAVRRWYATTAVGTPTMRAHSYSLLRAIMQTALADDLIDSNPCRISGASTARRVHKIRPATLDELETITKAMPDPYQAFVLMAAWLAMRYGELTELRRKDIDLHGEVARVRRAVVRVGEGFKVTTPKSDAGVRDISIPPHLIPAIEDHLHKHVNPGRESLLFPSVNDPNRHLAPSALYRMFYKARKAAGRPDLRVHDLRHSGAVLAASTGATLAELMQRLGHSTAGAALRYQHAAKGRDREIAALLSKLAENQEM.

A Core-binding (CB) domain is found at Ala-75 to Leu-153. A Tyr recombinase domain is found at His-175–Ala-364. Active-site residues include Arg-209, His-316, Arg-319, and His-342. The active-site O-(3'-phospho-DNA)-tyrosine intermediate is the Tyr-351.

It belongs to the 'phage' integrase family.

Its function is as follows. Integrase is necessary for integration of the phage into the host genome by site-specific recombination. In conjunction with excisionase, integrase is also necessary for excision of the prophage from the host genome. The chain is Putative prophage phiRv2 integrase from Mycobacterium tuberculosis (strain CDC 1551 / Oshkosh).